Here is a 225-residue protein sequence, read N- to C-terminus: Rho GDP-dissociation inhibitor 3 (225 aa).

The protein belongs to the Rho GDI family. As to expression, detected only in brain, lung, kidney and testis.

The protein localises to the cytoplasm. In terms of biological role, inhibits GDP/GTP exchange reaction of RhoB. Interacts specifically with the GDP- and GTP-bound forms of post-translationally processed Rhob and Rhog proteins, both of which show a growth-regulated expression in mammalian cells. Stimulates the release of the GDP-bound but not the GTP-bound RhoB protein. Also inhibits the GDP/GTP exchange of RhoB but shows less ability to inhibit the dissociation of prebound GTP. The polypeptide is Rho GDP-dissociation inhibitor 3 (Arhgdig) (Mus musculus (Mouse)).